Here is a 211-residue protein sequence, read N- to C-terminus: FMN-dependent NADH:quinone oxidoreductase (211 aa).

FMN-binding positions include 17-19 (SYS) and 102-105 (MWNF).

It belongs to the azoreductase type 1 family. As to quaternary structure, homodimer. FMN serves as cofactor.

The enzyme catalyses 2 a quinone + NADH + H(+) = 2 a 1,4-benzosemiquinone + NAD(+). It catalyses the reaction N,N-dimethyl-1,4-phenylenediamine + anthranilate + 2 NAD(+) = 2-(4-dimethylaminophenyl)diazenylbenzoate + 2 NADH + 2 H(+). Quinone reductase that provides resistance to thiol-specific stress caused by electrophilic quinones. Functionally, also exhibits azoreductase activity. Catalyzes the reductive cleavage of the azo bond in aromatic azo compounds to the corresponding amines. In Geobacillus kaustophilus (strain HTA426), this protein is FMN-dependent NADH:quinone oxidoreductase.